The following is a 237-amino-acid chain: Phosphoribosylaminoimidazole-succinocarboxamide synthase (237 aa).

The protein belongs to the SAICAR synthetase family.

It carries out the reaction 5-amino-1-(5-phospho-D-ribosyl)imidazole-4-carboxylate + L-aspartate + ATP = (2S)-2-[5-amino-1-(5-phospho-beta-D-ribosyl)imidazole-4-carboxamido]succinate + ADP + phosphate + 2 H(+). It participates in purine metabolism; IMP biosynthesis via de novo pathway; 5-amino-1-(5-phospho-D-ribosyl)imidazole-4-carboxamide from 5-amino-1-(5-phospho-D-ribosyl)imidazole-4-carboxylate: step 1/2. The protein is Phosphoribosylaminoimidazole-succinocarboxamide synthase of Baumannia cicadellinicola subsp. Homalodisca coagulata.